The primary structure comprises 226 residues: MARLLQASCLLSLLLAGFLPQSRGQDKSKMDCHGGVSGTIYEYGALTIDGEEYIPFKQYIGKYVLFVNVASYUGLTGQYIELNALQEELAPFGLVLLGFPCNQFGKQEPGENSEILPSLKYVRPGGGFVPNFQLFEKGDVNGEKEQKFYTFLKNSCPPTSELLGTSDRLFWEPMKVHDIRWNFEKFLVGPDGIPVMRWHHRTTISNVKMDILSYMRRQAALGVKRK.

The N-terminal stretch at 1–24 (MARLLQASCLLSLLLAGFLPQSRG) is a signal peptide. U73 is an active-site residue. Residue U73 is a non-standard amino acid, selenocysteine.

This sequence belongs to the glutathione peroxidase family. Homotetramer. Expressed intensively in the kidney and adrenal gland, and weakly in the cerebellum, heart, and lung. Secreted in plasma.

It is found in the secreted. It carries out the reaction 2 glutathione + H2O2 = glutathione disulfide + 2 H2O. The enzyme catalyses tert-butyl hydroperoxide + 2 glutathione = tert-butanol + glutathione disulfide + H2O. Functionally, protects cells and enzymes from oxidative damage, by catalyzing the reduction of hydrogen peroxide, lipid peroxides and organic hydroperoxide, by glutathione. In Macaca fuscata fuscata (Japanese macaque), this protein is Glutathione peroxidase 3.